The chain runs to 289 residues: 33 kDa chaperonin (289 aa).

Disulfide bonds link Cys-229–Cys-231 and Cys-262–Cys-265.

Belongs to the HSP33 family. Under oxidizing conditions two disulfide bonds are formed involving the reactive cysteines. Under reducing conditions zinc is bound to the reactive cysteines and the protein is inactive.

The protein localises to the cytoplasm. Redox regulated molecular chaperone. Protects both thermally unfolding and oxidatively damaged proteins from irreversible aggregation. Plays an important role in the bacterial defense system toward oxidative stress. The sequence is that of 33 kDa chaperonin from Pectobacterium atrosepticum (strain SCRI 1043 / ATCC BAA-672) (Erwinia carotovora subsp. atroseptica).